The following is a 248-amino-acid chain: NAD(P)H-quinone oxidoreductase subunit K 1 (248 aa).

A propeptide spanning residues 1-2 (MS) is cleaved from the precursor. Cys62, Cys63, Cys127, and Cys158 together coordinate [4Fe-4S] cluster. The tract at residues 228-248 (MGMPVPPALTTSQQKEQLNRG) is disordered. A compositionally biased stretch (polar residues) spans 236–248 (LTTSQQKEQLNRG).

Belongs to the complex I 20 kDa subunit family. As to quaternary structure, NDH-1 can be composed of about 15 different subunits; different subcomplexes with different compositions have been identified which probably have different functions. The cofactor is [4Fe-4S] cluster.

It localises to the cellular thylakoid membrane. The catalysed reaction is a plastoquinone + NADH + (n+1) H(+)(in) = a plastoquinol + NAD(+) + n H(+)(out). It catalyses the reaction a plastoquinone + NADPH + (n+1) H(+)(in) = a plastoquinol + NADP(+) + n H(+)(out). Functionally, NDH-1 shuttles electrons from an unknown electron donor, via FMN and iron-sulfur (Fe-S) centers, to quinones in the respiratory and/or the photosynthetic chain. The immediate electron acceptor for the enzyme in this species is believed to be plastoquinone. Couples the redox reaction to proton translocation, and thus conserves the redox energy in a proton gradient. Cyanobacterial NDH-1 also plays a role in inorganic carbon-concentration. This is NAD(P)H-quinone oxidoreductase subunit K 1 from Synechocystis sp. (strain ATCC 27184 / PCC 6803 / Kazusa).